Reading from the N-terminus, the 159-residue chain is Ribosomal RNA large subunit methyltransferase H (159 aa).

S-adenosyl-L-methionine is bound by residues leucine 76, glycine 108, and 127-132; that span reads FGKMTL.

The protein belongs to the RNA methyltransferase RlmH family. In terms of assembly, homodimer.

It is found in the cytoplasm. The catalysed reaction is pseudouridine(1915) in 23S rRNA + S-adenosyl-L-methionine = N(3)-methylpseudouridine(1915) in 23S rRNA + S-adenosyl-L-homocysteine + H(+). Functionally, specifically methylates the pseudouridine at position 1915 (m3Psi1915) in 23S rRNA. The sequence is that of Ribosomal RNA large subunit methyltransferase H from Lysinibacillus sphaericus (strain C3-41).